Here is a 173-residue protein sequence, read N- to C-terminus: Placenta-specific protein 1 (173 aa).

A signal peptide spans 1 to 23 (MKLIKFLGGVVFFTLMFSGYSEQ).

It belongs to the PLAC1 family.

It is found in the secreted. Its function is as follows. May play a role in placental development. The polypeptide is Placenta-specific protein 1 (Rattus norvegicus (Rat)).